A 504-amino-acid chain; its full sequence is L-amino-acid oxidase (504 aa).

Positions 1–18 are cleaved as a signal peptide; it reads MNVFFMFSLLFLAALGSC. Cys28 and Cys191 are oxidised to a cystine. FAD-binding positions include 61-62, 81-82, Arg89, and 105-108; these read MS, EA, and GPMR. Position 108 (Arg108) interacts with substrate. N-linked (GlcNAc...) asparagine glycosylation occurs at Asn190. A substrate-binding site is contributed by His241. Val279 is a binding site for FAD. Cys349 and Cys430 are disulfide-bonded. N-linked (GlcNAc...) asparagine glycosylation occurs at Asn379. Residue Tyr390 coordinates substrate. Residues Glu475 and 482–487 each bind FAD; that span reads GWIDST. Substrate is bound at residue 482-483; that stretch reads GW.

It belongs to the flavin monoamine oxidase family. FIG1 subfamily. Homodimer; non-covalently linked. FAD is required as a cofactor. As to expression, expressed by the venom gland.

The protein localises to the secreted. The catalysed reaction is an L-alpha-amino acid + O2 + H2O = a 2-oxocarboxylate + H2O2 + NH4(+). The enzyme catalyses L-leucine + O2 + H2O = 4-methyl-2-oxopentanoate + H2O2 + NH4(+). In terms of biological role, catalyzes an oxidative deamination of predominantly hydrophobic and aromatic L-amino acids, thus producing hydrogen peroxide that may contribute to the diverse toxic effects of this enzyme. Shows activity on L-Leu. Exhibits diverse biological activities, such as apoptosis, and inhibition of agonist- and shear stress-induced platelet aggregation (SIPA). Effects of snake L-amino oxidases on platelets are controversial, since they either induce aggregation or inhibit agonist-induced aggregation. These different effects are probably due to different experimental conditions. This protein may also induce hemorrhage, hemolysis, edema, antibacterial and antiparasitic activities. The sequence is that of L-amino-acid oxidase from Gloydius blomhoffii (Mamushi).